The primary structure comprises 425 residues: Phosphomethylpyrimidine synthase (425 aa).

Substrate is bound by residues Asn66, Met95, Tyr124, His159, 181–183 (SRG), 222–225 (DAYR), and Glu261. His265 provides a ligand contact to Zn(2+). Residue Tyr288 coordinates substrate. His329 lines the Zn(2+) pocket. Residues Cys406, Cys409, and Cys413 each coordinate [4Fe-4S] cluster.

The protein belongs to the ThiC family. [4Fe-4S] cluster serves as cofactor.

It catalyses the reaction 5-amino-1-(5-phospho-beta-D-ribosyl)imidazole + S-adenosyl-L-methionine = 4-amino-2-methyl-5-(phosphooxymethyl)pyrimidine + CO + 5'-deoxyadenosine + formate + L-methionine + 3 H(+). Its pathway is cofactor biosynthesis; thiamine diphosphate biosynthesis. In terms of biological role, catalyzes the synthesis of the hydroxymethylpyrimidine phosphate (HMP-P) moiety of thiamine from aminoimidazole ribotide (AIR) in a radical S-adenosyl-L-methionine (SAM)-dependent reaction. This is Phosphomethylpyrimidine synthase from Archaeoglobus fulgidus (strain ATCC 49558 / DSM 4304 / JCM 9628 / NBRC 100126 / VC-16).